Here is a 502-residue protein sequence, read N- to C-terminus: MRAMTEGLEMHDLLAVRRDKLNQLYDEGINPFGGKFERTHTSNEVIEQFAAFTKEELEEKDDHVVLAGRLMTKRGKGKAGFAHIQDIGGQIQIYVRQDAVGEEAYGLFKSLDIGDMVGVGGRPFKTKVGEMSVKVTELVILGKSLRPLPDKYHGLKDVEQRYRQRYLDLITSPESRTAFITRSKIIQVMRRYLDEKGFLEVETPMMHSIPGGASARPFVTHHNTLDMELYMRIAIELHLKRLIVGGLEKVYEIGRVFRNEGISTRHNPEFTMIELYEAYADYHDIMELTEGVIAHIAKEVLGTTTVQYGEHTVELAPSWKRVHMVDAIKEKTGVDFWQQMSDGEARALAKEHGVPVKETMTFGHVVNEFFEHFIEETLIQPTFVYGHPLAISPLAKKNEEDPRFTDRFELFIVGREHANAFSELNDPIDQRKRFEAQLIEREQGDDEAHRMDEDFIEALEYGMPPTGGLGIGIDRLVMLLTNSPSIRDVILFPQMRNREQGE.

Positions 409 and 416 each coordinate Mg(2+).

This sequence belongs to the class-II aminoacyl-tRNA synthetase family. In terms of assembly, homodimer. It depends on Mg(2+) as a cofactor.

Its subcellular location is the cytoplasm. The catalysed reaction is tRNA(Lys) + L-lysine + ATP = L-lysyl-tRNA(Lys) + AMP + diphosphate. This is Lysine--tRNA ligase from Shouchella clausii (strain KSM-K16) (Alkalihalobacillus clausii).